Reading from the N-terminus, the 234-residue chain is PHD finger protein ING1 (234 aa).

The interval 129–166 is disordered; the sequence is NNGKAGNAGEGGRGGRKKTRLATAASTAAASTGMTSSN. The segment covering 149–165 has biased composition (low complexity); it reads LATAASTAAASTGMTSS. A PHD-type zinc finger spans residues 178–227; the sequence is PTYCICNQVSFGEMVACDNNACKIEWFHFGCVGLKEQPKGKWYCPECATV. Positions 181, 183, 194, 199, 205, 208, 221, and 224 each coordinate Zn(2+).

It belongs to the ING family. In terms of assembly, interacts with H3K4me3 and to a lesser extent with H3K4me2. As to expression, ubiquitously expressed.

It localises to the nucleus. Histone-binding component that specifically recognizes H3 tails trimethylated on 'Lys-4' (H3K4me3), which mark transcription start sites of virtually all active genes. The sequence is that of PHD finger protein ING1 (ING1) from Arabidopsis thaliana (Mouse-ear cress).